Consider the following 553-residue polypeptide: Dihydrolipoyllysine-residue acetyltransferase component of pyruvate dehydrogenase complex (553 aa).

Residues 2–77 form the Lipoyl-binding 1 domain; it reads AFSVQMPALG…EVGGELAVIG (76 aa). Lys-43 carries the post-translational modification N6-lipoyllysine. A disordered region spans residues 81–125; sequence DAGEAAAPAPEKVPAAQPESKPAPEPPPVQPTSGAPAGGDAKPVL. Low complexity predominate over residues 84–100; that stretch reads EAAAPAPEKVPAAQPES. A compositionally biased stretch (pro residues) spans 101–110; sequence KPAPEPPPVQ. The Lipoyl-binding 2 domain maps to 121-196; sequence AKPVLMPELG…PVGGELARIG (76 aa). Lys-162 bears the N6-lipoyllysine mark. Disordered regions lie at residues 204–238 and 278–321; these read APAP…AGAA and AAAE…TQKA. The segment covering 206 to 232 has biased composition (pro residues); that stretch reads APKPAPKPVPEPAPTPKAEPAPSPPAA. Residues 243–280 enclose the Peripheral subunit-binding (PSBD) domain; the sequence is YVTPLVRKLASENNIDLAGVTGTGVGGRIRKQDVLAAA. Low complexity predominate over residues 288–300; that stretch reads APAPAAQAAAAPA. Active-site residues include His-523 and Asp-527.

Belongs to the 2-oxoacid dehydrogenase family. As to quaternary structure, forms a 24-polypeptide structural core with octahedral symmetry. Part of the PDH complex, consisting of multiple copies of AceE (E1), DlaT (E2) and Lpd (E3). It depends on (R)-lipoate as a cofactor.

The enzyme catalyses N(6)-[(R)-dihydrolipoyl]-L-lysyl-[protein] + acetyl-CoA = N(6)-[(R)-S(8)-acetyldihydrolipoyl]-L-lysyl-[protein] + CoA. Component of the pyruvate dehydrogenase (PDH) complex, that catalyzes the overall conversion of pyruvate to acetyl-CoA and CO(2). This Mycobacterium bovis (strain ATCC BAA-935 / AF2122/97) protein is Dihydrolipoyllysine-residue acetyltransferase component of pyruvate dehydrogenase complex (dlaT).